The chain runs to 299 residues: Probable lipid kinase YegS (299 aa).

The region spanning 2 to 133 (AEFPASLLIL…IDMAQVNKQT (132 aa)) is the DAGKc domain. ATP is bound by residues Thr-40, 66–72 (GDGTINE), and Thr-95. Mg(2+) contacts are provided by Leu-215, Asp-218, and Leu-220. Catalysis depends on Glu-271, which acts as the Proton acceptor.

Belongs to the diacylglycerol/lipid kinase family. YegS lipid kinase subfamily. Mg(2+) is required as a cofactor. The cofactor is Ca(2+).

It is found in the cytoplasm. Its function is as follows. Probably phosphorylates lipids; the in vivo substrate is unknown. The protein is Probable lipid kinase YegS of Escherichia coli O6:K15:H31 (strain 536 / UPEC).